The following is a 227-amino-acid chain: MGQKVNPVGMRIGITRDWTSNWYADKKDFADRLNEDLNVRQLLQKRLKGAAVSRIQIERPARNAKIIIHSARPGVIIGKKGGEIEALRDEISKVMKVPVHITIEEVRKPELDAKLVAENIAQQLERRVMFRRAMKRAVQNTLRQGALGVKISVSGRLGGAEIARTEWYREGRVPLHTFRADIDYATASAKTTYGIIGVKVWIFKGEVHAPKPQAEEAAPQETEEEVK.

The 69-residue stretch at 39-107 (VRQLLQKRLK…PVHITIEEVR (69 aa)) folds into the KH type-2 domain.

This sequence belongs to the universal ribosomal protein uS3 family. In terms of assembly, part of the 30S ribosomal subunit. Forms a tight complex with proteins S10 and S14.

In terms of biological role, binds the lower part of the 30S subunit head. Binds mRNA in the 70S ribosome, positioning it for translation. This chain is Small ribosomal subunit protein uS3, found in Coxiella burnetii (strain CbuK_Q154) (Coxiella burnetii (strain Q154)).